Here is a 230-residue protein sequence, read N- to C-terminus: Ribonuclease 3 (230 aa).

One can recognise an RNase III domain in the interval 1–134 (MKQLEELLST…FLGALLLDKG (134 aa)). Glu-47 contacts Mg(2+). Residue Asp-51 is part of the active site. Asp-120 and Glu-123 together coordinate Mg(2+). Glu-123 is a catalytic residue. Residues 160 to 229 (DYKTCLQEFL…AKNALAQLSE (70 aa)) form the DRBM domain.

The protein belongs to the ribonuclease III family. Homodimer. It depends on Mg(2+) as a cofactor.

Its subcellular location is the cytoplasm. The catalysed reaction is Endonucleolytic cleavage to 5'-phosphomonoester.. In terms of biological role, digests double-stranded RNA. Involved in the processing of primary rRNA transcript to yield the immediate precursors to the large and small rRNAs (23S and 16S). Processes some mRNAs, and tRNAs when they are encoded in the rRNA operon. Processes pre-crRNA and tracrRNA of type II CRISPR loci if present in the organism. The polypeptide is Ribonuclease 3 (Streptococcus pyogenes serotype M3 (strain SSI-1)).